Here is a 424-residue protein sequence, read N- to C-terminus: MERPISEAYFQEAKRHIPGGVSSPVRAFKAVGGTPPFLVRGEGAYVWDADGNRYLDYVMSWGPLILGHAHPKVLARVRETLERGLTFGAPSPLEVALAKKVKRAYPFVDLVRFVNSGTEATMSALRLARGYTGRPYIVKFRGNYHGHADGLLVEAGSGALTLGVPSSAGVPEEYAKLTLVLEYNDPEGLREVLKRRGEEIAAIIFEPVVGNAGVLVPTEDFLKALHEAKAYGVLLIADEVMTGFRLAFGGATELLGLKPDLVTLGKILGGGLPAAAYAGRREIMEKVAPLGPVYQAGTLSGNPLAMAAGLATLELLEENPGYYAYLEDLGARLEAGLKEVLKEKGLPHTVNRVGSMITVFFTEGPVVTFQDARRTDTELFKRFFHGLLDRGIYWPPSNFEAAFLSVAHREEDVEKTLEALRKAL.

An N6-(pyridoxal phosphate)lysine modification is found at K266.

Belongs to the class-III pyridoxal-phosphate-dependent aminotransferase family. HemL subfamily. As to quaternary structure, homodimer. Pyridoxal 5'-phosphate serves as cofactor.

The protein resides in the cytoplasm. It carries out the reaction (S)-4-amino-5-oxopentanoate = 5-aminolevulinate. The protein operates within porphyrin-containing compound metabolism; protoporphyrin-IX biosynthesis; 5-aminolevulinate from L-glutamyl-tRNA(Glu): step 2/2. In Thermus thermophilus (strain ATCC 27634 / DSM 579 / HB8), this protein is Glutamate-1-semialdehyde 2,1-aminomutase.